Here is a 186-residue protein sequence, read N- to C-terminus: Adenylate kinase (186 aa).

14-19 (GAGKGT) is an ATP binding site. Positions 34–63 (STGDILRDHVARGTPLGERVRPIMERGDLV) are NMP. AMP is bound by residues T35, R40, 61–63 (DLV), 84–87 (GFPR), and Q91. Positions 125–135 (RRAELEGRSDD) are LID. R126 serves as a coordination point for ATP. The AMP site is built by R132 and R143. Residue G171 coordinates ATP.

Belongs to the adenylate kinase family. In terms of assembly, monomer.

The protein localises to the cytoplasm. It carries out the reaction AMP + ATP = 2 ADP. The protein operates within purine metabolism; AMP biosynthesis via salvage pathway; AMP from ADP: step 1/1. Functionally, catalyzes the reversible transfer of the terminal phosphate group between ATP and AMP. Plays an important role in cellular energy homeostasis and in adenine nucleotide metabolism. The polypeptide is Adenylate kinase (Thermus thermophilus (strain ATCC BAA-163 / DSM 7039 / HB27)).